A 354-amino-acid polypeptide reads, in one-letter code: UDP-N-acetylglucosamine--N-acetylmuramyl-(pentapeptide) pyrophosphoryl-undecaprenol N-acetylglucosamine transferase (354 aa).

Positions 196 and 288 each coordinate UDP-N-acetyl-alpha-D-glucosamine.

Belongs to the glycosyltransferase 28 family. MurG subfamily.

It is found in the cell membrane. It catalyses the reaction Mur2Ac(oyl-L-Ala-gamma-D-Glu-L-Lys-D-Ala-D-Ala)-di-trans,octa-cis-undecaprenyl diphosphate + UDP-N-acetyl-alpha-D-glucosamine = beta-D-GlcNAc-(1-&gt;4)-Mur2Ac(oyl-L-Ala-gamma-D-Glu-L-Lys-D-Ala-D-Ala)-di-trans,octa-cis-undecaprenyl diphosphate + UDP + H(+). Its pathway is cell wall biogenesis; peptidoglycan biosynthesis. Functionally, cell wall formation. Catalyzes the transfer of a GlcNAc subunit on undecaprenyl-pyrophosphoryl-MurNAc-pentapeptide (lipid intermediate I) to form undecaprenyl-pyrophosphoryl-MurNAc-(pentapeptide)GlcNAc (lipid intermediate II). The protein is UDP-N-acetylglucosamine--N-acetylmuramyl-(pentapeptide) pyrophosphoryl-undecaprenol N-acetylglucosamine transferase of Streptococcus suis (strain 98HAH33).